The primary structure comprises 299 residues: Cathepsin B-like CP3 (299 aa).

Residues 1–19 (MKLFLLAAAAFSAPALTVS) form the signal peptide. Disulfide bonds link C87/C114, C97/C140, and C133/C176. C100 is an active-site residue. Catalysis depends on residues H244 and N265.

It belongs to the peptidase C1 family.

It is found in the vacuole. Its function is as follows. Thiol protease which is required for parasite excystation and invasion of the proximal small intestine of the human host. The polypeptide is Cathepsin B-like CP3 (CP3) (Giardia intestinalis (Giardia lamblia)).